Reading from the N-terminus, the 223-residue chain is MTPSELMPREKLLTYGANALTDQELLAIFLRTGIKGLPVMQLANQVLTTFGSLRALLTADLNAFCQIKGLGQTQFIQLQASKEMTKRYLAQQMQMCETINTPHLAIMYFQTELEFEEREVFMVLFLDNQNRLIKKEKMFYGTINQATVHPREIIKEALKCNAAAIIVAHNHPSGNCTASQADRQLTQKIKAACHLVEVRFVDHIIVGKGSYFSFEEERFHQNN.

One can recognise an MPN domain in the interval 98–220 (TINTPHLAIM…YFSFEEERFH (123 aa)). The Zn(2+) site is built by H169, H171, and D182. A JAMM motif motif is present at residues 169–182 (HNHPSGNCTASQAD).

It belongs to the UPF0758 family.

This is UPF0758 protein HD_0732 from Haemophilus ducreyi (strain 35000HP / ATCC 700724).